The sequence spans 498 residues: Elastase (498 aa).

Positions 1 to 23 are cleaved as a signal peptide; the sequence is MKKVSTLDLLFVAIMGVSPAAFA. Positions 24–197 are excised as a propeptide; sequence ADLIDVSKLP…VLDQWEGLAH (174 aa). Cys-227 and Cys-255 are oxidised to a cystine. Residue Asp-333 coordinates Ca(2+). His-337 lines the Zn(2+) pocket. Glu-338 is a catalytic residue. Residues His-341 and Glu-361 each contribute to the Zn(2+) site. Ca(2+) is bound by residues Glu-369, Glu-372, Asp-380, and Leu-382. The Proton donor role is filled by His-420. An intrachain disulfide couples Cys-467 to Cys-494.

This sequence belongs to the peptidase M4 family. Monomer. Ca(2+) is required as a cofactor. Requires Zn(2+) as cofactor. Post-translationally, made as a membrane-associated pre-pro-protein, which is exported to the periplasm (yielding pro-elastase) with removal of the signal peptide. Under certain conditions pro-elastase can accumulate. The pro-peptide is removed in the periplasm yielding a (mature length) 33 kDa protein, probably by autocatalysis. The pro-peptide probably remains associated with elastase and can be secreted. Further alterations (perhaps processing) seems to be required before secretion into the extracellular space.

It is found in the secreted. The catalysed reaction is Hydrolysis of proteins including elastin, collagen types III and IV, fibronectin and immunoglobulin A, generally with bulky hydrophobic group at P1'. Insulin B chain cleavage pattern identical to that of thermolysin, but specificity differs in other respects.. Inhibited by phosphoramidon. Its function is as follows. Cleaves host elastin, collagen, IgG, and several complement components as well as endogenous pro-aminopeptidase. Autocatalyses processing of its pro-peptide. Processes the pro-peptide of pro-chitin-binding protein (cbpD). Involved in the pathogenesis of P.aeruginosa infections. In Pseudomonas aeruginosa (strain ATCC 15692 / DSM 22644 / CIP 104116 / JCM 14847 / LMG 12228 / 1C / PRS 101 / PAO1), this protein is Elastase (lasB).